Here is a 142-residue protein sequence, read N- to C-terminus: MAISDSVSPEPQQLLCLTITAFRKPGMSEAAYREYMTKTHAPLVSGLMEEYGIVRYNMTHNNSKSRPLLFQLYDPEFSKLSDYDCIVQFVFRRMEDFLRMKSDPRFLEKVAPDHQKFADTSRSTMTIGYFEEFLENGKVVPK.

The EthD domain maps to 25 to 121; it reads PGMSEAAYRE…PDHQKFADTS (97 aa).

This sequence belongs to the tpcK family.

Its pathway is pigment biosynthesis. Functionally, dehydratase; part of the Pks1 gene cluster that mediates the biosynthesis of an anthraquinone derivative pigment that contributes to conidial pigmentation that provides protection from UV radiation, heat and cold stress. The polyketide synthase Pks1 produces 1-acetyl-2,4,6,8-tetrahydroxy-9,10-anthraquinone though condensation of acetyl-CoA with malonyl-CoA. The dehydratase EthD and the laccase Mlac1 further convert the anthraquinone derivative into the final conidial pigment. This Metarhizium robertsii (strain ARSEF 23 / ATCC MYA-3075) (Metarhizium anisopliae (strain ARSEF 23)) protein is Conidial pigment biosynthesis dehydratase EthD.